Reading from the N-terminus, the 778-residue chain is Tastin (778 aa).

Basic and acidic residues predominate over residues 1-11; that stretch reads MTTRQATKDPL. Positions 1–115 are disordered; that stretch reads MTTRQATKDP…PGPPAQTEAP (115 aa). 3 positions are modified to phosphoserine: serine 16, serine 98, and serine 170. A disordered region spans residues 212 to 244; it reads ISPSGPSFHPSTRPSFQELRRETAGSSRTSVSQ. The span at 235-244 shows a compositional bias: polar residues; it reads AGSSRTSVSQ. Residues serine 324, serine 334, serine 344, and serine 362 each carry the phosphoserine modification. Threonine 363 is modified (phosphothreonine). Serine 376 is modified (phosphoserine). Disordered regions lie at residues 406-425, 508-587, and 600-641; these read EGSG…NRTP, ECGE…AEPR, and PESS…RVEL. The segment covering 513-523 has biased composition (pro residues); that stretch reads QPCPPAEPGPP. Tandem repeats lie at residues 516 to 548, 549 to 581, 582 to 614, and 615 to 647. Residues 516–647 are 4 X 33 AA approximate tandem repeats; sequence PPAEPGPPEA…RVELGASEPC (132 aa). The span at 560–574 shows a compositional bias: basic and acidic residues; that stretch reads CRSEPEIPESSRQEQ. Residues 612–622 are compositionally biased toward pro residues; that stretch reads EPCPPAEPGPL.

As to quaternary structure, directly binds bystin, and indirectly trophinin. As to expression, strong expression at implantation sites. Was exclusively localized to the apical side of the syncytiotrophoblast. Also found in macrophages.

The protein localises to the cytoplasm. Functionally, could be involved with bystin and trophinin in a cell adhesion molecule complex that mediates an initial attachment of the blastocyst to uterine epithelial cells at the time of the embryo implantation. The polypeptide is Tastin (TROAP) (Homo sapiens (Human)).